The following is a 284-amino-acid chain: Bifunctional protein FolD (284 aa).

Residues 163–165 and serine 188 contribute to the NADP(+) site; that span reads GRS.

The protein belongs to the tetrahydrofolate dehydrogenase/cyclohydrolase family. Homodimer.

It carries out the reaction (6R)-5,10-methylene-5,6,7,8-tetrahydrofolate + NADP(+) = (6R)-5,10-methenyltetrahydrofolate + NADPH. It catalyses the reaction (6R)-5,10-methenyltetrahydrofolate + H2O = (6R)-10-formyltetrahydrofolate + H(+). The protein operates within one-carbon metabolism; tetrahydrofolate interconversion. Its function is as follows. Catalyzes the oxidation of 5,10-methylenetetrahydrofolate to 5,10-methenyltetrahydrofolate and then the hydrolysis of 5,10-methenyltetrahydrofolate to 10-formyltetrahydrofolate. In Lactococcus lactis subsp. lactis (strain IL1403) (Streptococcus lactis), this protein is Bifunctional protein FolD.